An 873-amino-acid polypeptide reads, in one-letter code: Paramyosin (873 aa).

Positions 1-25 (MSSRSSKYMYKSSGGAGDISIEYGT) are nonhelical region. Positions 26–852 (DLGALTRLED…IRAKHRSWVT (827 aa)) form a coiled coil. Residues 853–873 (TSQVPGGTRQVFVTEESSQNF) form a nonhelical region region.

The protein belongs to the paramyosin family. As to quaternary structure, homodimer. Binds IgG and collagen. In terms of tissue distribution, expressed in all tissues except in saliva.

The protein localises to the cytoplasm. It localises to the myofibril. In terms of biological role, paramyosin is a major structural component of many thick filaments isolated from invertebrate muscles. The sequence is that of Paramyosin (PRM) from Rhipicephalus microplus (Cattle tick).